The sequence spans 166 residues: MAKEQQQATDLNEKLIAVNRVSKTVKGGRIFSFTALTVVGDGNGRIGFGYGKAREVPAAIQKSMEKARRNMFTIALNEGTLHHAVKGRHTGSKVYMQPASEGTGIIAGGAMRAVLEVVGVRNVLAKAYGSTNPINVVRATILGLTSVKSPEMVAAKRGLTVEAISE.

The S5 DRBM domain occupies 11 to 74; that stretch reads LNEKLIAVNR…EKARRNMFTI (64 aa).

This sequence belongs to the universal ribosomal protein uS5 family. Part of the 30S ribosomal subunit. Contacts proteins S4 and S8.

In terms of biological role, with S4 and S12 plays an important role in translational accuracy. Its function is as follows. Located at the back of the 30S subunit body where it stabilizes the conformation of the head with respect to the body. The chain is Small ribosomal subunit protein uS5 from Aliivibrio salmonicida (strain LFI1238) (Vibrio salmonicida (strain LFI1238)).